A 272-amino-acid chain; its full sequence is Undecaprenyl-diphosphatase (272 aa).

8 helical membrane-spanning segments follow: residues 5–25 (YSLF…FLPV), 45–65 (AKTF…VVFW), 88–108 (HLTL…GLAF), 114–134 (ALFD…LLLA), 153–172 (YRQA…PGFS), 189–209 (YAAS…ASGL), 221–241 (GDLP…LIAI), and 251–271 (ISFV…YWVF).

It belongs to the UppP family.

The protein resides in the cell inner membrane. The enzyme catalyses di-trans,octa-cis-undecaprenyl diphosphate + H2O = di-trans,octa-cis-undecaprenyl phosphate + phosphate + H(+). Its function is as follows. Catalyzes the dephosphorylation of undecaprenyl diphosphate (UPP). Confers resistance to bacitracin. The protein is Undecaprenyl-diphosphatase of Yersinia pseudotuberculosis serotype IB (strain PB1/+).